The following is a 456-amino-acid chain: Solute carrier family 38 member 6 (456 aa).

Met-1 carries the N-acetylmethionine modification. Phosphoserine is present on residues Ser-4 and Ser-7. A run of 5 helical transmembrane segments spans residues 42–62, 85–105, 111–131, 170–190, and 191–211; these read SPGV…MGSG, VALL…QTAV, LGLF…IIIQ, LLII…KIGF, and LGYT…VVII. Cys-218 and Cys-238 are joined by a disulfide. N-linked (GlcNAc...) asparagine glycosylation occurs at Asn-233. A helical membrane pass occupies residues 250 to 270; sequence AYALPTMAFSFLCHTSILPIY. Residue Asn-283 is glycosylated (N-linked (GlcNAc...) asparagine). 5 helical membrane-spanning segments follow: residues 288 to 308, 327 to 347, 371 to 391, 394 to 414, and 431 to 451; these read AIAL…LTFY, VVVM…VPLI, FLIT…VPDI, VFGV…PGLF, and AFVL…LIIF.

Belongs to the amino acid/polyamine transporter 2 family.

It localises to the cell membrane. The protein localises to the synapse. The catalysed reaction is L-glutamine(out) = L-glutamine(in). It carries out the reaction L-glutamate(out) = L-glutamate(in). Amino acid transporter with an apparent selectivity for L-glutamine and L-glutamate. May facilitate glutamine uptake in excitatory neurons. The transport mechanism remains to be elucidated. This Homo sapiens (Human) protein is Solute carrier family 38 member 6.